We begin with the raw amino-acid sequence, 305 residues long: uncharacterized protein (305 aa).

This is an uncharacterized protein from Streptomyces griseus.